The following is a 180-amino-acid chain: Large ribosomal subunit protein uL5 (180 aa).

This sequence belongs to the universal ribosomal protein uL5 family. In terms of assembly, part of the 50S ribosomal subunit; part of the 5S rRNA/L5/L18/L25 subcomplex. Contacts the 5S rRNA and the P site tRNA. Forms a bridge to the 30S subunit in the 70S ribosome.

Its function is as follows. This is one of the proteins that bind and probably mediate the attachment of the 5S RNA into the large ribosomal subunit, where it forms part of the central protuberance. In the 70S ribosome it contacts protein S13 of the 30S subunit (bridge B1b), connecting the 2 subunits; this bridge is implicated in subunit movement. Contacts the P site tRNA; the 5S rRNA and some of its associated proteins might help stabilize positioning of ribosome-bound tRNAs. In Latilactobacillus sakei subsp. sakei (strain 23K) (Lactobacillus sakei subsp. sakei), this protein is Large ribosomal subunit protein uL5.